Here is a 179-residue protein sequence, read N- to C-terminus: ATP synthase subunit delta (179 aa).

It belongs to the ATPase delta chain family. F-type ATPases have 2 components, F(1) - the catalytic core - and F(0) - the membrane proton channel. F(1) has five subunits: alpha(3), beta(3), gamma(1), delta(1), epsilon(1). F(0) has three main subunits: a(1), b(2) and c(10-14). The alpha and beta chains form an alternating ring which encloses part of the gamma chain. F(1) is attached to F(0) by a central stalk formed by the gamma and epsilon chains, while a peripheral stalk is formed by the delta and b chains.

It is found in the cell membrane. Functionally, f(1)F(0) ATP synthase produces ATP from ADP in the presence of a proton or sodium gradient. F-type ATPases consist of two structural domains, F(1) containing the extramembraneous catalytic core and F(0) containing the membrane proton channel, linked together by a central stalk and a peripheral stalk. During catalysis, ATP synthesis in the catalytic domain of F(1) is coupled via a rotary mechanism of the central stalk subunits to proton translocation. In terms of biological role, this protein is part of the stalk that links CF(0) to CF(1). It either transmits conformational changes from CF(0) to CF(1) or is implicated in proton conduction. This chain is ATP synthase subunit delta, found in Staphylococcus haemolyticus (strain JCSC1435).